The primary structure comprises 185 residues: Ribosome-recycling factor (185 aa).

The protein belongs to the RRF family.

It localises to the cytoplasm. Functionally, responsible for the release of ribosomes from messenger RNA at the termination of protein biosynthesis. May increase the efficiency of translation by recycling ribosomes from one round of translation to another. This chain is Ribosome-recycling factor, found in Vibrio campbellii (strain ATCC BAA-1116).